Reading from the N-terminus, the 448-residue chain is Late embryogenesis abundant protein ECP63 (448 aa).

Composition is skewed to basic and acidic residues over residues 282–326 and 334–354; these read TEEA…EEAG and QKTR…KDSA. Disordered regions lie at residues 282–360 and 411–448; these read TEEA…RGNE and SKPG…KGKL. Residues 297-331 adopt a coiled-coil conformation; that stretch reads KENMEKAGEVTRQKMEEMRLEGKELKEEAGAKAQE. Residues 420–432 are compositionally biased toward polar residues; it reads LKASDQMTGQTFN. Positions 435 to 448 are enriched in basic and acidic residues; the sequence is GRMDDDARKDKGKL.

Belongs to the LEA type 4 family. As to expression, expressed in mature seeds.

Its function is as follows. May be involved in the BHLH109-mediated regulation of somatic embryogenesis. This chain is Late embryogenesis abundant protein ECP63, found in Arabidopsis thaliana (Mouse-ear cress).